Consider the following 772-residue polypeptide: Mitochondrial intermediate peptidase (772 aa).

Residues 1–42 (MFANSARNALKKRPQNLQPFRFQGCLFSKRANRPLTTKVQHL) constitute a mitochondrion transit peptide. His-556 is a binding site for Zn(2+). Residue Glu-557 is part of the active site. Residues His-560 and His-563 each contribute to the Zn(2+) site.

This sequence belongs to the peptidase M3 family. The cofactor is Zn(2+).

Its subcellular location is the mitochondrion matrix. It carries out the reaction Release of an N-terminal octapeptide as second stage of processing of some proteins imported into the mitochondrion.. Its function is as follows. Cleaves proteins, imported into the mitochondrion, to their mature size. While most mitochondrial precursor proteins are processed to the mature form in one step by mitochondrial processing peptidase (MPP), the sequential cleavage by MIP of an octapeptide after initial processing by MPP is a required step for a subgroup of nuclear-encoded precursor proteins destined for the matrix or the inner membrane. The polypeptide is Mitochondrial intermediate peptidase (OCT1) (Laccaria bicolor (strain S238N-H82 / ATCC MYA-4686) (Bicoloured deceiver)).